The sequence spans 284 residues: NAD kinase (284 aa).

Catalysis depends on aspartate 70, which acts as the Proton acceptor. Residues 70–71, 139–140, lysine 167, aspartate 169, leucine 177, 180–185, and glutamine 236 each bind NAD(+); these read DG, NE, and TAYNLS.

This sequence belongs to the NAD kinase family. The cofactor is a divalent metal cation.

It is found in the cytoplasm. The enzyme catalyses NAD(+) + ATP = ADP + NADP(+) + H(+). Its function is as follows. Involved in the regulation of the intracellular balance of NAD and NADP, and is a key enzyme in the biosynthesis of NADP. Catalyzes specifically the phosphorylation on 2'-hydroxyl of the adenosine moiety of NAD to yield NADP. The protein is NAD kinase of Helicobacter pylori (strain Shi470).